Consider the following 638-residue polypeptide: Asparagine--tRNA ligase, cytoplasmic 2 (638 aa).

Residues 1–16 (MESHGKTHQKEHDNDL) are compositionally biased toward basic and acidic residues. 2 disordered regions span residues 1-23 (MESH…PITL) and 62-87 (VKKN…DQAH).

Belongs to the class-II aminoacyl-tRNA synthetase family.

It is found in the cytoplasm. Its subcellular location is the cytosol. It carries out the reaction tRNA(Asn) + L-asparagine + ATP = L-asparaginyl-tRNA(Asn) + AMP + diphosphate + H(+). This is Asparagine--tRNA ligase, cytoplasmic 2 from Arabidopsis thaliana (Mouse-ear cress).